The sequence spans 136 residues: Keratin-associated protein 4-2 (136 aa).

20 consecutive repeat copies span residues 5–9 (CCGSV), 20–24 (CCRPS), 25–29 (CCQTT), 30–34 (CCRTT), 35–39 (CCRPS), 40–44 (CCVSS), 45–49 (CCRPQ), 50–54 (CCQSV), 55–59 (CCQPT), 60–64 (CCSPS), 65–69 (CCQTT), 70–74 (CCRTT), 75–79 (CCRPS), 80–84 (CCVSS), 90–94 (CCQSV), 95–99 (YCQPT), 100–104 (CCRPS), 110–114 (CCRTT), 120–124 (CCVST), and 125–129 (CCRPT). The 20 X 5 AA repeats OF C-C-[GRQVS]-[SPT]-[VSTQ] stretch occupies residues 5–129 (CCGSVCSDQG…CCVSTCCRPT (125 aa)).

It belongs to the KRTAP type 4 family. Interacts with hair keratins.

In terms of biological role, in the hair cortex, hair keratin intermediate filaments are embedded in an interfilamentous matrix, consisting of hair keratin-associated proteins (KRTAP), which are essential for the formation of a rigid and resistant hair shaft through their extensive disulfide bond cross-linking with abundant cysteine residues of hair keratins. The matrix proteins include the high-sulfur and high-glycine-tyrosine keratins. The sequence is that of Keratin-associated protein 4-2 (KRTAP4-2) from Homo sapiens (Human).